We begin with the raw amino-acid sequence, 209 residues long: Ancillary SecYEG translocon subunit (209 aa).

Residues 1-23 (MAAHLEEQQELDNFKYFWKTTGK) lie on the Cytoplasmic side of the membrane. Residues 24–42 (WLFALLILAALGYLGYTVY) form a helical membrane-spanning segment. Residues 43 to 209 (QNRAASQNQE…LLQMKLDSLK (167 aa)) are Periplasmic-facing. The stretch at 161 to 194 (PLLMETKGDVYAAQEKSQEALKNYGQALEKMPQD) is one TPR repeat.

It belongs to the YfgM family. As to quaternary structure, interacts with the SecYEG translocon. Forms a complex with PpiD.

It is found in the cell inner membrane. May mediate protein transfer from the SecYEG translocon to the periplasmic chaperone network via its periplasmic C-terminal region. The protein is Ancillary SecYEG translocon subunit of Neisseria gonorrhoeae (strain ATCC 700825 / FA 1090).